The sequence spans 697 residues: Elongation factor G 2 (697 aa).

Positions 5 to 280 (SKYRNIGIFA…AVVDYLPDPV (276 aa)) constitute a tr-type G domain. GTP contacts are provided by residues 14-21 (AHVDAGKT), 78-82 (DTPGH), and 132-135 (NKLD).

Belongs to the TRAFAC class translation factor GTPase superfamily. Classic translation factor GTPase family. EF-G/EF-2 subfamily.

The protein resides in the cytoplasm. Its function is as follows. Catalyzes the GTP-dependent ribosomal translocation step during translation elongation. During this step, the ribosome changes from the pre-translocational (PRE) to the post-translocational (POST) state as the newly formed A-site-bound peptidyl-tRNA and P-site-bound deacylated tRNA move to the P and E sites, respectively. Catalyzes the coordinated movement of the two tRNA molecules, the mRNA and conformational changes in the ribosome. The chain is Elongation factor G 2 from Shewanella frigidimarina (strain NCIMB 400).